The chain runs to 105 residues: Protein LBH (105 aa).

The region spanning 18 to 104 is the LBH domain; the sequence is MTEVMMNTQP…CEETAKENKE (87 aa). A Phosphoserine modification is found at Ser63. The segment covering 86 to 96 has biased composition (acidic residues); the sequence is LVQEDEQDNCE. The segment at 86 to 105 is disordered; it reads LVQEDEQDNCEETAKENKEQ.

Belongs to the LBH family. Highly expressed in heart, and expressed at low levels in placenta, lung, skeletal muscle, kidney and liver.

It is found in the nucleus. It localises to the cytoplasm. In terms of biological role, transcriptional activator which may act in mitogen-activated protein kinase signaling pathway. The polypeptide is Protein LBH (Homo sapiens (Human)).